Here is a 112-residue protein sequence, read N- to C-terminus: MEAYEQVQKGPLKLKGVAELGVTKRKKKKKDKDKAKLLEAMGTSKKNEEEKRRGLDKRTPAQAAFEKMQEKRQMERILKKASKTHKQRVEDFNRHLDTLTEHYDIPKVSWTK.

Residues 23 to 58 are disordered; sequence TKRKKKKKDKDKAKLLEAMGTSKKNEEEKRRGLDKR. Positions 45 to 58 are enriched in basic and acidic residues; it reads KKNEEEKRRGLDKR.

Belongs to the FAM32 family.

It is found in the nucleus. May induce G2 arrest and apoptosis. May also increase cell sensitivity to apoptotic stimuli. The polypeptide is Protein FAM32A (FAM32A) (Bos taurus (Bovine)).